The following is a 361-amino-acid chain: Probable dual-specificity RNA methyltransferase RlmN (361 aa).

E99 acts as the Proton acceptor in catalysis. One can recognise a Radical SAM core domain in the interval 105-342 (GPNRMTACVS…VTIRKSYGTP (238 aa)). C112 and C347 are oxidised to a cystine. 3 residues coordinate [4Fe-4S] cluster: C119, C123, and C126. S-adenosyl-L-methionine contacts are provided by residues 171–172 (GE), S204, 227–229 (SLH), and N304. C347 functions as the S-methylcysteine intermediate in the catalytic mechanism.

The protein belongs to the radical SAM superfamily. RlmN family. Requires [4Fe-4S] cluster as cofactor.

It is found in the cytoplasm. The enzyme catalyses adenosine(2503) in 23S rRNA + 2 reduced [2Fe-2S]-[ferredoxin] + 2 S-adenosyl-L-methionine = 2-methyladenosine(2503) in 23S rRNA + 5'-deoxyadenosine + L-methionine + 2 oxidized [2Fe-2S]-[ferredoxin] + S-adenosyl-L-homocysteine. It carries out the reaction adenosine(37) in tRNA + 2 reduced [2Fe-2S]-[ferredoxin] + 2 S-adenosyl-L-methionine = 2-methyladenosine(37) in tRNA + 5'-deoxyadenosine + L-methionine + 2 oxidized [2Fe-2S]-[ferredoxin] + S-adenosyl-L-homocysteine. Its function is as follows. Specifically methylates position 2 of adenine 2503 in 23S rRNA and position 2 of adenine 37 in tRNAs. This is Probable dual-specificity RNA methyltransferase RlmN from Chlorobium luteolum (strain DSM 273 / BCRC 81028 / 2530) (Pelodictyon luteolum).